The chain runs to 262 residues: Putative dimethyl sulfoxide reductase iron-sulfur subunit B (262 aa).

4Fe-4S ferredoxin-type domains lie at 4 to 34 (YGLV…MGQF), 62 to 93 (LEMT…TRDD), and 94 to 123 (GIVE…FNWD). Positions 13, 16, 19, 23, 71, 74, 79, 83, 103, 106, 109, 113, 147, 150, 162, and 166 each coordinate [4Fe-4S] cluster. A disordered region spans residues 209-262 (NGEMSPGRPWKSKKLESELDDDEAAKAARRRSGSVENGYDVTPHVPAETAGGDD).

Probable multiprotein complex that likely consists of DmsA, DmsB and DmsC. Requires [4Fe-4S] cluster as cofactor.

Its subcellular location is the cell membrane. In terms of biological role, dimethyl sulfoxide (DMSO) reductase catalyzes the reduction of dimethyl sulfoxide (DMSO) to dimethyl sulfide (DMS) during anaerobic respiration; it can also use trimethylamine N-oxide (TMAO) as terminal electron acceptor. Subunit B is proposed to be involved in electron transfer. This chain is Putative dimethyl sulfoxide reductase iron-sulfur subunit B (dmsB), found in Halobacterium salinarum (strain ATCC 700922 / JCM 11081 / NRC-1) (Halobacterium halobium).